Reading from the N-terminus, the 341-residue chain is Ketol-acid reductoisomerase (NADP(+)) (341 aa).

Residues 1-182 (MTEMFYDDDA…GGTRAGVIKT (182 aa)) enclose the KARI N-terminal Rossmann domain. NADP(+) is bound by residues 25-28 (YGSQ), Lys48, Ser51, Ser53, and 83-86 (DQHQ). His108 is a catalytic residue. Residue Gly134 participates in NADP(+) binding. The KARI C-terminal knotted domain occupies 183–328 (TFTEETETDL…RELRGLFSWQ (146 aa)). 4 residues coordinate Mg(2+): Asp191, Glu195, Glu227, and Glu231. A substrate-binding site is contributed by Ser252.

This sequence belongs to the ketol-acid reductoisomerase family. It depends on Mg(2+) as a cofactor.

It carries out the reaction (2R)-2,3-dihydroxy-3-methylbutanoate + NADP(+) = (2S)-2-acetolactate + NADPH + H(+). It catalyses the reaction (2R,3R)-2,3-dihydroxy-3-methylpentanoate + NADP(+) = (S)-2-ethyl-2-hydroxy-3-oxobutanoate + NADPH + H(+). It participates in amino-acid biosynthesis; L-isoleucine biosynthesis; L-isoleucine from 2-oxobutanoate: step 2/4. Its pathway is amino-acid biosynthesis; L-valine biosynthesis; L-valine from pyruvate: step 2/4. Involved in the biosynthesis of branched-chain amino acids (BCAA). Catalyzes an alkyl-migration followed by a ketol-acid reduction of (S)-2-acetolactate (S2AL) to yield (R)-2,3-dihydroxy-isovalerate. In the isomerase reaction, S2AL is rearranged via a Mg-dependent methyl migration to produce 3-hydroxy-3-methyl-2-ketobutyrate (HMKB). In the reductase reaction, this 2-ketoacid undergoes a metal-dependent reduction by NADPH to yield (R)-2,3-dihydroxy-isovalerate. This Arthrobacter sp. (strain FB24) protein is Ketol-acid reductoisomerase (NADP(+)).